Consider the following 423-residue polypeptide: MMAPSIDTMAEELDTSITESTMALSVYLLATAFGPLIIGPVSEIYGRKSIFHITNIWFLVWNLVCGFAHSKGLLMAARLLAGFGASAVYSLGYGVLGDVWSAEQRGRSLSLYLLIPLTGSAVGPIVSGFIVKYSTWRWMFWSTAILQLTLDLSSLLFHESYAPLLLRRRAEELRSNTGGSRYHAAIEMREAGLSPPRKLSRSLSRPLRLLAFHPIIQMQAILEGIDYGLLYFALSSFSALHVAAYGESVEISGLHYIVICIGTVSGSQLCGPLMDYAYQRLSSNTGETQVPELRIPLLLPGALITPIGFLLYGWAAQYHLIWVVVDVGAALLSLGMQIFDTTLHAYVMDSYPEHVSSASAATQVLRSLLAFAFPLFSNSLYDSLGYGLGNSLLAFLSIGIALPATGILWRWGATLRGRQQSSY.

11 consecutive transmembrane segments (helical) span residues 21-41, 49-69, 79-99, 111-131, 138-158, 220-240, 256-278, 295-315, 319-339, 360-380, and 392-411; these read TMAL…IGPV, SIFH…GFAH, LLAG…LGDV, LYLL…GFIV, WMFW…LLFH, AILE…FSAL, YIVI…DYAY, IPLL…YGWA, HLIW…MQIF, AATQ…SNSL, and LLAF…LWRW.

Belongs to the major facilitator superfamily.

The protein resides in the membrane. Probable efflux pump; part of the gene cluster 27 that mediates the biosynthesis of asparasone A, a sclerotium-specific anthraquinone pigment important for sclerotial survival. The protein is Probable efflux pump mfs2 of Aspergillus flavus (strain ATCC 200026 / FGSC A1120 / IAM 13836 / NRRL 3357 / JCM 12722 / SRRC 167).